We begin with the raw amino-acid sequence, 361 residues long: MSHQHPVYRRIVVKVGTNVITGRNGKLDPAILDSLTSQIAALMQDGVEVILVTSGAVSAGRGIVSLSGNLTPVETRQVLAATGQIRLINAYNDRFKKHGITGAQLLVTKGDFRDRQHYLNMRTCFEALLQQKIVPIVNENDAVAITELMFTDNDELSGLIASMLQVDANIILSNVDGLFDTQSEGNPVIEEIDPGTKNFSQYIRPGKSEFGRGGMLTKCNIAHKLSRLGITVHIANGTTPGILQTIAHGGKAGTKFIAQKPKQSRKRWVALSEGLEKGAVIINQGAIDALTSGQRATSLLPVGITGVEGSFQRGDIIRICSTDGKVIGYGMASCTAEKARSAMGQKGLKPVIHYDHLYLVP.

K14 serves as a coordination point for ATP. Substrate contacts are provided by S54, D141, and N153. Residues 277-355 form the PUA domain; it reads KGAVIINQGA…KGLKPVIHYD (79 aa).

This sequence belongs to the glutamate 5-kinase family.

It localises to the cytoplasm. The catalysed reaction is L-glutamate + ATP = L-glutamyl 5-phosphate + ADP. It functions in the pathway amino-acid biosynthesis; L-proline biosynthesis; L-glutamate 5-semialdehyde from L-glutamate: step 1/2. Functionally, catalyzes the transfer of a phosphate group to glutamate to form L-glutamate 5-phosphate. The sequence is that of Glutamate 5-kinase from Chlorobaculum tepidum (strain ATCC 49652 / DSM 12025 / NBRC 103806 / TLS) (Chlorobium tepidum).